Here is a 91-residue protein sequence, read N- to C-terminus: UPF0250 protein NMA1380 (91 aa).

The protein belongs to the UPF0250 family.

The polypeptide is UPF0250 protein NMA1380 (Neisseria meningitidis serogroup A / serotype 4A (strain DSM 15465 / Z2491)).